The following is a 368-amino-acid chain: tRNA 2-selenouridine synthase (368 aa).

One can recognise a Rhodanese domain in the interval 15–138 (MLSGHPMIDV…MRQYLIEVID (124 aa)). The active-site S-selanylcysteine intermediate is the Cys98.

This sequence belongs to the SelU family. As to quaternary structure, monomer.

It catalyses the reaction 5-methylaminomethyl-2-thiouridine(34) in tRNA + selenophosphate + (2E)-geranyl diphosphate + H2O + H(+) = 5-methylaminomethyl-2-selenouridine(34) in tRNA + (2E)-thiogeraniol + phosphate + diphosphate. The enzyme catalyses 5-methylaminomethyl-2-thiouridine(34) in tRNA + (2E)-geranyl diphosphate = 5-methylaminomethyl-S-(2E)-geranyl-thiouridine(34) in tRNA + diphosphate. The catalysed reaction is 5-methylaminomethyl-S-(2E)-geranyl-thiouridine(34) in tRNA + selenophosphate + H(+) = 5-methylaminomethyl-2-(Se-phospho)selenouridine(34) in tRNA + (2E)-thiogeraniol. It carries out the reaction 5-methylaminomethyl-2-(Se-phospho)selenouridine(34) in tRNA + H2O = 5-methylaminomethyl-2-selenouridine(34) in tRNA + phosphate. In terms of biological role, involved in the post-transcriptional modification of the uridine at the wobble position (U34) of tRNA(Lys), tRNA(Glu) and tRNA(Gln). Catalyzes the conversion of 2-thiouridine (S2U-RNA) to 2-selenouridine (Se2U-RNA). Acts in a two-step process involving geranylation of 2-thiouridine (S2U) to S-geranyl-2-thiouridine (geS2U) and subsequent selenation of the latter derivative to 2-selenouridine (Se2U) in the tRNA chain. The sequence is that of tRNA 2-selenouridine synthase from Shewanella woodyi (strain ATCC 51908 / MS32).